Reading from the N-terminus, the 142-residue chain is Large ribosomal subunit protein uL13 (142 aa).

The protein belongs to the universal ribosomal protein uL13 family. Part of the 50S ribosomal subunit.

In terms of biological role, this protein is one of the early assembly proteins of the 50S ribosomal subunit, although it is not seen to bind rRNA by itself. It is important during the early stages of 50S assembly. The chain is Large ribosomal subunit protein uL13 from Shewanella oneidensis (strain ATCC 700550 / JCM 31522 / CIP 106686 / LMG 19005 / NCIMB 14063 / MR-1).